We begin with the raw amino-acid sequence, 275 residues long: Large ribosomal subunit protein uL2 (275 aa).

Disordered stretches follow at residues 28–59 (KPFAPLLDSQSTTAGRNNNGHITTRHKGGGHK) and 224–275 (AMNP…RHKR). Residues 35 to 49 (DSQSTTAGRNNNGHI) show a composition bias toward polar residues. A compositionally biased stretch (basic residues) spans 50–59 (TTRHKGGGHK).

The protein belongs to the universal ribosomal protein uL2 family. As to quaternary structure, part of the 50S ribosomal subunit. Forms a bridge to the 30S subunit in the 70S ribosome.

In terms of biological role, one of the primary rRNA binding proteins. Required for association of the 30S and 50S subunits to form the 70S ribosome, for tRNA binding and peptide bond formation. It has been suggested to have peptidyltransferase activity; this is somewhat controversial. Makes several contacts with the 16S rRNA in the 70S ribosome. The protein is Large ribosomal subunit protein uL2 of Paraburkholderia xenovorans (strain LB400).